The primary structure comprises 330 residues: MLAQRIINGENISKEEALSLFVDNNIDTYDLLHEAYQVRKYYYGRKVKLNMILNAKSGICPEDCGYCGQSKLMKNKDKYLLVDSEQIKSGADFCATHDIGTYCIVMSGRGPSDKEVEHIADTVEAIKHEHPQLKICACLGLTNDEQAKKLKLAGVDRYNHNINTSENYHDEVVTTHTYQDRVDTIEIMKANNISPCSGVICGMGETDEDIIDMALALRAIDADSIPVNFLHPVKGTKFGNEDNLTPERCLRILSMFRLINPSKEIRIAGGREVNLRTLQPLAMQAANSIFVGDYLITDGQPNELDYKMLEDLGFEIDINESEINKAALKI.

Residues 42-268 (YYGRKVKLNM…INPSKEIRIA (227 aa)) form the Radical SAM core domain. The [4Fe-4S] cluster site is built by C60, C64, and C67. [2Fe-2S] cluster is bound by residues C103, C136, C196, and R266.

The protein belongs to the radical SAM superfamily. Biotin synthase family. As to quaternary structure, homodimer. [4Fe-4S] cluster is required as a cofactor. Requires [2Fe-2S] cluster as cofactor.

The catalysed reaction is (4R,5S)-dethiobiotin + (sulfur carrier)-SH + 2 reduced [2Fe-2S]-[ferredoxin] + 2 S-adenosyl-L-methionine = (sulfur carrier)-H + biotin + 2 5'-deoxyadenosine + 2 L-methionine + 2 oxidized [2Fe-2S]-[ferredoxin]. It functions in the pathway cofactor biosynthesis; biotin biosynthesis; biotin from 7,8-diaminononanoate: step 2/2. Catalyzes the conversion of dethiobiotin (DTB) to biotin by the insertion of a sulfur atom into dethiobiotin via a radical-based mechanism. The sequence is that of Biotin synthase from Macrococcus caseolyticus (strain JCSC5402) (Macrococcoides caseolyticum).